We begin with the raw amino-acid sequence, 877 residues long: DNA mismatch repair protein MutS (877 aa).

627-634 (GPNMAGKS) serves as a coordination point for ATP.

Belongs to the DNA mismatch repair MutS family.

This protein is involved in the repair of mismatches in DNA. It is possible that it carries out the mismatch recognition step. This protein has a weak ATPase activity. The polypeptide is DNA mismatch repair protein MutS (Dinoroseobacter shibae (strain DSM 16493 / NCIMB 14021 / DFL 12)).